We begin with the raw amino-acid sequence, 179 residues long: MSRIGKQPVPVPAGVDVTIEGQNVSVKGPKGTLSLAVAEPIVVARDDEGAIVVTRPNDERRNRSLHGLSRTLVANLVEGVTQGYTTKMEIYGVGYRVALKGSNLEFALGYSHPVVIEPPEGITFAVETPTKFSVSGIDKQKVGQISAIIRRLRRPDPYKGKGVRYEGEQIRRKVGKTGK.

This sequence belongs to the universal ribosomal protein uL6 family. In terms of assembly, part of the 50S ribosomal subunit.

Its function is as follows. This protein binds to the 23S rRNA, and is important in its secondary structure. It is located near the subunit interface in the base of the L7/L12 stalk, and near the tRNA binding site of the peptidyltransferase center. The chain is Large ribosomal subunit protein uL6 from Mycobacterium sp. (strain KMS).